A 239-amino-acid chain; its full sequence is Phosphoglycolate phosphatase (239 aa).

Asp14 functions as the Nucleophile in the catalytic mechanism. Asp14 and Asp16 together coordinate Mg(2+). Lys160 is a substrate binding site. Mg(2+)-binding residues include Asp183 and Asp187.

The protein belongs to the archaeal SPP-like hydrolase family. Mg(2+) serves as cofactor.

It carries out the reaction 2-phosphoglycolate + H2O = glycolate + phosphate. In terms of biological role, catalyzes the dephosphorylation of 2-phosphoglycolate. The protein is Phosphoglycolate phosphatase of Aeropyrum pernix (strain ATCC 700893 / DSM 11879 / JCM 9820 / NBRC 100138 / K1).